The chain runs to 764 residues: Tyrosine-protein phosphatase corkscrew (764 aa).

One can recognise an SH2 domain in the interval 1–95 (WFHGNLSGKE…GTVVHLRQPF (95 aa)). A Tyrosine-protein phosphatase domain is found at 117 to 522 (FWEEFESLQQ…KFVYYAVQHY (406 aa)). The PTPase insert (Cys/Ser-rich) stretch occupies residues 174-325 (IRLPTDGDLY…LNGEGNQFKT (152 aa)). The interval 246-273 (SKHKRSESMSASANASAAGTGPGTPTAA) is disordered. The segment covering 255-273 (SASANASAAGTGPGTPTAA) has biased composition (low complexity). Residues D422, 460–466 (CSAGIGR), and Q507 contribute to the substrate site. C460 acts as the Phosphocysteine intermediate in catalysis. A disordered region spans residues 599-666 (AAKLQPPLPP…NANGNGNILG (68 aa)). Low complexity predominate over residues 612–666 (SNNNNSSGNSGSYCNSSSSTSTAQHNGVVSSSNNCSSGSGSANSSNANGNGNILG).

Belongs to the protein-tyrosine phosphatase family. Non-receptor class subfamily.

The protein localises to the cytoplasm. The enzyme catalyses O-phospho-L-tyrosyl-[protein] + H2O = L-tyrosyl-[protein] + phosphate. Required in all receptor tyrosine kinase signaling pathways. Functions downstream of the receptor tyrosine kinase torso, acting in concert with D-Raf via tailless. Also functions downstream of Egfr (epidermal growth factor receptor) and btl (fibroblast growth factor receptor). The SH2 domain suggests that csw effects its role by mediating heteromeric protein interactions. Maternally required for normal determination of cell fates at the termini of the embryo. Required for cell fate specification of the ventral ectoderm, in the developing embryonic CNS and for embryonic tracheal cell migration. Functions during imaginal development for proper formation of adult structures such as eyes, aristae, L5 wing vein and the tarsal claw. This chain is Tyrosine-protein phosphatase corkscrew (csw), found in Drosophila virilis (Fruit fly).